A 127-amino-acid polypeptide reads, in one-letter code: Multiple antibiotic resistance protein MarA (127 aa).

The HTH araC/xylS-type domain maps to 12–110 (HSILDWIEDN…DVPPHKYRMT (99 aa)). DNA-binding regions (H-T-H motif) lie at residues 29 to 50 (EKVSERSGYSKWHLQRMFKKET) and 77 to 100 (ILYLAERYGFESQQTLTRTFKNYF).

Monomer.

Its function is as follows. May be a transcriptional activator of genes involved in the multiple antibiotic resistance (Mar) phenotype. It can also activate genes such as sodA, zwf and micF. The polypeptide is Multiple antibiotic resistance protein MarA (marA) (Escherichia coli (strain K12)).